Reading from the N-terminus, the 256-residue chain is Imidazole glycerol phosphate synthase subunit HisF (256 aa).

Active-site residues include Asp11 and Asp130.

This sequence belongs to the HisA/HisF family. Heterodimer of HisH and HisF.

It localises to the cytoplasm. It carries out the reaction 5-[(5-phospho-1-deoxy-D-ribulos-1-ylimino)methylamino]-1-(5-phospho-beta-D-ribosyl)imidazole-4-carboxamide + L-glutamine = D-erythro-1-(imidazol-4-yl)glycerol 3-phosphate + 5-amino-1-(5-phospho-beta-D-ribosyl)imidazole-4-carboxamide + L-glutamate + H(+). The protein operates within amino-acid biosynthesis; L-histidine biosynthesis; L-histidine from 5-phospho-alpha-D-ribose 1-diphosphate: step 5/9. Its function is as follows. IGPS catalyzes the conversion of PRFAR and glutamine to IGP, AICAR and glutamate. The HisF subunit catalyzes the cyclization activity that produces IGP and AICAR from PRFAR using the ammonia provided by the HisH subunit. The chain is Imidazole glycerol phosphate synthase subunit HisF from Cupriavidus pinatubonensis (strain JMP 134 / LMG 1197) (Cupriavidus necator (strain JMP 134)).